A 234-amino-acid chain; its full sequence is Small ribosomal subunit protein uS3 (234 aa).

The KH type-2 domain occupies 39-107 (IRKFLKKELY…EVSINIKEVK (69 aa)).

Belongs to the universal ribosomal protein uS3 family. In terms of assembly, part of the 30S ribosomal subunit. Forms a tight complex with proteins S10 and S14.

Binds the lower part of the 30S subunit head. Binds mRNA in the 70S ribosome, positioning it for translation. This chain is Small ribosomal subunit protein uS3, found in Helicobacter pylori (strain P12).